The following is a 339-amino-acid chain: Very-long-chain 3-oxoacyl-CoA reductase (339 aa).

A helical membrane pass occupies residues 19–39 (VALFLLSIGGLFTACKLFSFC). Leucine 64, lysine 105, aspartate 119, aspartate 127, asparagine 146, tyrosine 213, lysine 217, valine 246, and serine 248 together coordinate NADP(+). Catalysis depends on tyrosine 213, which acts as the Proton donor. Residue lysine 217 is the Lowers pKa of active site Tyr of the active site.

It belongs to the short-chain dehydrogenases/reductases (SDR) family.

The protein localises to the endoplasmic reticulum membrane. The catalysed reaction is a very-long-chain (3R)-3-hydroxyacyl-CoA + NADP(+) = a very-long-chain 3-oxoacyl-CoA + NADPH + H(+). Its pathway is lipid metabolism; fatty acid biosynthesis. Functionally, component of the microsomal membrane bound fatty acid elongation system, which produces the 26-carbon very long-chain fatty acids (VLCFA) from palmitate. Catalyzes the reduction of the 3-ketoacyl-CoA intermediate that is formed in each cycle of fatty acid elongation. VLCFAs serve as precursors for ceramide and sphingolipids. The protein is Very-long-chain 3-oxoacyl-CoA reductase of Ajellomyces capsulatus (strain NAm1 / WU24) (Darling's disease fungus).